Consider the following 137-residue polypeptide: Large-conductance mechanosensitive channel (137 aa).

The next 2 helical transmembrane spans lie at F10 to G30 and G76 to I96.

This sequence belongs to the MscL family. In terms of assembly, homopentamer.

It is found in the cell inner membrane. Its function is as follows. Channel that opens in response to stretch forces in the membrane lipid bilayer. May participate in the regulation of osmotic pressure changes within the cell. This chain is Large-conductance mechanosensitive channel, found in Escherichia coli O45:K1 (strain S88 / ExPEC).